Consider the following 158-residue polypeptide: Small ribosomal subunit protein uS15 (158 aa).

A compositionally biased stretch (basic residues) spans 1 to 10 (MARMHTRRRG). Residues 1 to 66 (MARMHTRRRG…EGVKGTPIPD (66 aa)) are disordered. Residues 21–32 (DPPEWSDIDADA) show a composition bias toward acidic residues. Basic and acidic residues predominate over residues 33–45 (IEERVVELAEQGH).

Belongs to the universal ribosomal protein uS15 family. In terms of assembly, part of the 30S ribosomal subunit.

This chain is Small ribosomal subunit protein uS15, found in Haloquadratum walsbyi (strain DSM 16790 / HBSQ001).